Reading from the N-terminus, the 425-residue chain is Perilipin-2 (425 aa).

The residue at position 2 (alanine 2) is an N-acetylalanine. Serine 213 is modified (phosphoserine). At tyrosine 230 the chain carries Phosphotyrosine.

This sequence belongs to the perilipin family. In terms of assembly, interacts with IRGC. Acylated; primarily with C14, C16 and C18 fatty acids. In terms of processing, phosphorylation at Tyr-230 by isoform 1 of CHKA (CHKalpha2) promotes dissociation from lipid droplets: dissociation is followed by recruitment of autophagosome machinery to lipid droplets and subsequent lipid droplet lipolysis. Post-translationally, polyubiquitination of Nt-acetylatable A-PLIN2 by MARCHF6 lead to degradation by 26S proteasomes. In terms of tissue distribution, adipose tissue specific. Expressed abundantly and preferentially in fat pads.

It is found in the membrane. Its subcellular location is the lipid droplet. Its function is as follows. Structural component of lipid droplets, which is required for the formation and maintenance of lipid storage droplets. In Mus musculus (Mouse), this protein is Perilipin-2.